We begin with the raw amino-acid sequence, 319 residues long: MAAAVAAPRLISLKAVAKLGFREISQIRQLAPLHSAIPHFGMLRCRSRQPFSTSVVKAQATATEQSPGEVVQKVESPVVVITGASRGIGKAIALALGKAGCKVLVNYARSAKEAEEVAKQIEEYGGQAITFGGDVSKATDVDAMMKTALDKWGTIDVVVNNAGITRDTLLIRMKQSQWDEVIALNLTGVFLCTQAAVKIMMKKKRGRIINISSVVGLIGNIGQANYAAAKGGVISFSKTAAREGASRNINVNVVCPGFIASDMTAELGEDMEKKILGTIPLGRYGKAEEVAGLVEFLALSPAASYITGQAFTIDGGIAI.

Residues 1–57 (MAAAVAAPRLISLKAVAKLGFREISQIRQLAPLHSAIPHFGMLRCRSRQPFSTSVVK) constitute a chloroplast transit peptide. At Ala58 the chain carries N-acetylalanine. An NADP(+)-binding site is contributed by 81–105 (ITGASRGIGKAIALALGKAGCKVLV). Ser213 contacts substrate. Tyr226 functions as the Proton acceptor in the catalytic mechanism.

This sequence belongs to the short-chain dehydrogenases/reductases (SDR) family. Homotetramer.

It is found in the plastid. It localises to the chloroplast. It carries out the reaction a (3R)-hydroxyacyl-[ACP] + NADP(+) = a 3-oxoacyl-[ACP] + NADPH + H(+). It functions in the pathway lipid metabolism; fatty acid biosynthesis. In Arabidopsis thaliana (Mouse-ear cress), this protein is 3-oxoacyl-[acyl-carrier-protein] reductase, chloroplastic.